We begin with the raw amino-acid sequence, 406 residues long: MRLFRWLLKQPVPKQIERYSRFSPSPLSIKQFLDFGRDNACEKTSYMFLRKELPVRLANTMREVNLLPDNLLNRPSVGLVQSWYMQSFLELLEYENKSPEDPQVLDNFLQVLIKVRNRHNDVVPTMAQGVIEYKEKFGFDPFISTNIQYFLDRFYTNRISFRMLINQHTLLFGGDTNPVHPKHIGSIDPTCNVADVVKDAYETAKMLCEQYYLVAPELEVEEFNAKAPDKPIQVVYVPSHLFHMLFELFKNSMRATVELYEDRKEGYPAVKTLVTLGKEDLSIKISDLGGGVPLRKIDRLFNYMYSTAPRPSLEPTRAAPLAGFGYGLPISRLYARYFQGDLKLYSMEGVGTDAVIYLKALSSESFERLPVFNKSAWRHYKTTPEADDWSNPSSEPRDASKYKAKQ.

The Histidine kinase domain maps to Ile-131 to Ser-362. ATP is bound at residue Glu-247–Arg-254. The residue at position 278 (Lys-278) is an N6-succinyllysine. ATP is bound by residues Asp-287, Ser-306–Thr-307, and Gly-323–Leu-328. Residues Thr-383–Gln-406 form a disordered region. Positions Glu-395–Gln-406 are enriched in basic and acidic residues.

Belongs to the PDK/BCKDK protein kinase family. In terms of assembly, homodimer. Interacts with the pyruvate dehydrogenase complex subunit DLAT, and is part of the multimeric pyruvate dehydrogenase complex that contains multiple copies of pyruvate dehydrogenase (E1), dihydrolipoamide acetyltransferase (DLAT, E2) and lipoamide dehydrogenase (DLD, E3). In terms of tissue distribution, expressed in heart, skeletal muscle, spinal cord, as well as fetal and adult brain.

It is found in the mitochondrion matrix. It carries out the reaction L-seryl-[pyruvate dehydrogenase E1 alpha subunit] + ATP = O-phospho-L-seryl-[pyruvate dehydrogenase E1 alpha subunit] + ADP + H(+). Its activity is regulated as follows. Activated by interaction with DLAT. Inhibited by AZD7545, dichloroacetate and radicicol. Inhibits pyruvate dehydrogenase activity by phosphorylation of the E1 subunit PDHA1, and thereby regulates glucose metabolism and aerobic respiration. Can also phosphorylate PDHA2. Decreases glucose utilization and increases fat metabolism in response to prolonged fasting, and as adaptation to a high-fat diet. Plays a role in glucose homeostasis and in maintaining normal blood glucose levels in function of nutrient levels and under starvation. Plays a role in the generation of reactive oxygen species. The chain is [Pyruvate dehydrogenase (acetyl-transferring)] kinase isozyme 3, mitochondrial (PDK3) from Homo sapiens (Human).